Consider the following 367-residue polypeptide: Pre-small/secreted glycoprotein (367 aa).

Residues 1-33 form the signal peptide; it reads MGSGYQLLQLPRERFRKTSFLVWVIILFQRAIS. Asparagine 41 is a glycosylation site (N-linked (GlcNAc...) asparagine; by host). 2 cysteine pairs are disulfide-bonded: cysteine 109-cysteine 136 and cysteine 122-cysteine 148. N-linked (GlcNAc...) asparagine; by host glycans are attached at residues asparagine 205, asparagine 239, asparagine 258, and asparagine 269.

The protein belongs to the filoviruses glycoprotein family. As to quaternary structure, homodimer; disulfide-linked. The homodimers are linked by two disulfide bonds in a parallel orientation. Monomer. In terms of processing, this precursor is processed into mature sGP and delta-peptide by host furin or furin-like proteases. The cleavage site corresponds to the furin optimal cleavage sequence [KR]-X-[KR]-R. Post-translationally, N-glycosylated. O-glycosylated.

It is found in the secreted. Seems to possess an anti-inflammatory activity as it can reverse the barrier-decreasing effects of TNF alpha. Might therefore contribute to the lack of inflammatory reaction seen during infection in spite the of extensive necrosis and massive virus production. Does not seem to be involved in activation of primary macrophages. Does not seem to interact specifically with neutrophils. Functionally, viroporin that permeabilizes mammalian cell plasma membranes. It acts by altering permeation of ionic compounds and small molecules. This activity may lead to viral enterotoxic activity. This Reston ebolavirus (strain Siena/Philippine-92) (REBOV) protein is Pre-small/secreted glycoprotein (GP).